The primary structure comprises 201 residues: ATP synthase subunit delta, chloroplastic (201 aa).

Belongs to the ATPase delta chain family. F-type ATPases have 2 components, F(1) - the catalytic core - and F(0) - the membrane proton channel. F(1) has five subunits: alpha(3), beta(3), gamma(1), delta(1), epsilon(1). CF(0) has four main subunits: a(1), b(1), b'(1) and c(10-14). The alpha and beta chains form an alternating ring which encloses part of the gamma chain. F(1) is attached to F(0) by a central stalk formed by the gamma and epsilon chains, while a peripheral stalk is formed by the delta, b and b' chains.

It is found in the plastid. The protein resides in the chloroplast thylakoid membrane. In terms of biological role, f(1)F(0) ATP synthase produces ATP from ADP in the presence of a proton or sodium gradient. F-type ATPases consist of two structural domains, F(1) containing the extramembraneous catalytic core and F(0) containing the membrane proton channel, linked together by a central stalk and a peripheral stalk. During catalysis, ATP synthesis in the catalytic domain of F(1) is coupled via a rotary mechanism of the central stalk subunits to proton translocation. Its function is as follows. This protein is part of the stalk that links CF(0) to CF(1). It either transmits conformational changes from CF(0) to CF(1) or is implicated in proton conduction. This chain is ATP synthase subunit delta, chloroplastic, found in Vaucheria litorea (Yellow-green alga).